The following is a 417-amino-acid chain: NADH-quinone oxidoreductase subunit D (417 aa).

It belongs to the complex I 49 kDa subunit family. As to quaternary structure, NDH-1 is composed of 14 different subunits. Subunits NuoB, C, D, E, F, and G constitute the peripheral sector of the complex.

The protein localises to the cell inner membrane. The catalysed reaction is a quinone + NADH + 5 H(+)(in) = a quinol + NAD(+) + 4 H(+)(out). In terms of biological role, NDH-1 shuttles electrons from NADH, via FMN and iron-sulfur (Fe-S) centers, to quinones in the respiratory chain. The immediate electron acceptor for the enzyme in this species is believed to be ubiquinone. Couples the redox reaction to proton translocation (for every two electrons transferred, four hydrogen ions are translocated across the cytoplasmic membrane), and thus conserves the redox energy in a proton gradient. The chain is NADH-quinone oxidoreductase subunit D from Francisella philomiragia subsp. philomiragia (strain ATCC 25017 / CCUG 19701 / FSC 153 / O#319-036).